The sequence spans 143 residues: Large ribosomal subunit protein uL16c (143 aa).

The protein belongs to the universal ribosomal protein uL16 family. In terms of assembly, part of the 50S ribosomal subunit.

Its subcellular location is the plastid. It is found in the chloroplast. In Chlorokybus atmophyticus (Soil alga), this protein is Large ribosomal subunit protein uL16c.